Consider the following 491-residue polypeptide: Argininosuccinate lyase (491 aa).

It belongs to the lyase 1 family. Argininosuccinate lyase subfamily.

It localises to the cytoplasm. It carries out the reaction 2-(N(omega)-L-arginino)succinate = fumarate + L-arginine. It functions in the pathway amino-acid biosynthesis; L-arginine biosynthesis; L-arginine from L-ornithine and carbamoyl phosphate: step 3/3. The sequence is that of Argininosuccinate lyase from Methanosarcina barkeri (strain Fusaro / DSM 804).